A 214-amino-acid chain; its full sequence is Threonylcarbamoyl-AMP synthase (214 aa).

The region spanning 9-214 (TDSVIQAAHW…GDALTGQIIR (206 aa)) is the YrdC-like domain.

Belongs to the SUA5 family. TsaC subfamily.

It is found in the cytoplasm. The catalysed reaction is L-threonine + hydrogencarbonate + ATP = L-threonylcarbamoyladenylate + diphosphate + H2O. In terms of biological role, required for the formation of a threonylcarbamoyl group on adenosine at position 37 (t(6)A37) in tRNAs that read codons beginning with adenine. Catalyzes the conversion of L-threonine, HCO(3)(-)/CO(2) and ATP to give threonylcarbamoyl-AMP (TC-AMP) as the acyladenylate intermediate, with the release of diphosphate. The protein is Threonylcarbamoyl-AMP synthase of Psychrobacter arcticus (strain DSM 17307 / VKM B-2377 / 273-4).